Consider the following 468-residue polypeptide: Glycine--tRNA ligase (468 aa).

Substrate contacts are provided by Arg101 and Glu170. ATP contacts are provided by residues 202–204, 212–217, 289–290, and 333–336; these read RNE, FRTREF, EL, and GLTR. 217–221 is a binding site for substrate; that stretch reads FEQME. Position 329 to 333 (329 to 333) interacts with substrate; sequence EPAAG.

The protein belongs to the class-II aminoacyl-tRNA synthetase family. Homodimer.

Its subcellular location is the cytoplasm. The enzyme catalyses tRNA(Gly) + glycine + ATP = glycyl-tRNA(Gly) + AMP + diphosphate. Functionally, catalyzes the attachment of glycine to tRNA(Gly). The protein is Glycine--tRNA ligase of Mycolicibacterium vanbaalenii (strain DSM 7251 / JCM 13017 / BCRC 16820 / KCTC 9966 / NRRL B-24157 / PYR-1) (Mycobacterium vanbaalenii).